The sequence spans 393 residues: S-adenosylmethionine synthase 1 (393 aa).

Residue E9 coordinates Mg(2+). Position 15 (H15) interacts with ATP. E43 lines the K(+) pocket. E56 and Q99 together coordinate L-methionine. Residues 167–169 (DGK), 235–238 (SGRF), D246, 252–253 (RK), A269, K273, and K277 contribute to the ATP site. D246 provides a ligand contact to L-methionine. Residue K277 participates in L-methionine binding.

It belongs to the AdoMet synthase family. Homotetramer. Mn(2+) serves as cofactor. The cofactor is Mg(2+). Requires Co(2+) as cofactor. It depends on K(+) as a cofactor.

It is found in the cytoplasm. It carries out the reaction L-methionine + ATP + H2O = S-adenosyl-L-methionine + phosphate + diphosphate. Its pathway is amino-acid biosynthesis; S-adenosyl-L-methionine biosynthesis; S-adenosyl-L-methionine from L-methionine: step 1/1. Catalyzes the formation of S-adenosylmethionine from methionine and ATP. The reaction comprises two steps that are both catalyzed by the same enzyme: formation of S-adenosylmethionine (AdoMet) and triphosphate, and subsequent hydrolysis of the triphosphate. The sequence is that of S-adenosylmethionine synthase 1 (SAMS1) from Brassica juncea (Indian mustard).